Here is a 379-residue protein sequence, read N- to C-terminus: Cytochrome b (379 aa).

Transmembrane regions (helical) follow at residues F33–M53, W77–V98, W113–L133, and F178–L198. Residues H83 and H97 each contribute to the heme b site. 2 residues coordinate heme b: H182 and H196. An a ubiquinone-binding site is contributed by H201. Helical transmembrane passes span I226–F246, L288–N308, I320–G340, and F347–P367.

The protein belongs to the cytochrome b family. The cytochrome bc1 complex contains 11 subunits: 3 respiratory subunits (MT-CYB, CYC1 and UQCRFS1), 2 core proteins (UQCRC1 and UQCRC2) and 6 low-molecular weight proteins (UQCRH/QCR6, UQCRB/QCR7, UQCRQ/QCR8, UQCR10/QCR9, UQCR11/QCR10 and a cleavage product of UQCRFS1). This cytochrome bc1 complex then forms a dimer. It depends on heme b as a cofactor.

Its subcellular location is the mitochondrion inner membrane. Its function is as follows. Component of the ubiquinol-cytochrome c reductase complex (complex III or cytochrome b-c1 complex) that is part of the mitochondrial respiratory chain. The b-c1 complex mediates electron transfer from ubiquinol to cytochrome c. Contributes to the generation of a proton gradient across the mitochondrial membrane that is then used for ATP synthesis. This Akodon toba (Chaco grass mouse) protein is Cytochrome b (MT-CYB).